The chain runs to 554 residues: 3-(3-hydroxy-phenyl)propionate/3-hydroxycinnamic acid hydroxylase (554 aa).

FAD is bound by residues 17-46 (QVAIAGAGPVGLMMANYLGQMGIDVLVVEK) and 285-295 (FRIDRVLLAGD).

Belongs to the PheA/TfdB FAD monooxygenase family. FAD serves as cofactor.

It catalyses the reaction 3-(3-hydroxyphenyl)propanoate + NADH + O2 + H(+) = 3-(2,3-dihydroxyphenyl)propanoate + NAD(+) + H2O. The enzyme catalyses (2E)-3-(3-hydroxyphenyl)prop-2-enoate + NADH + O2 + H(+) = (2E)-3-(2,3-dihydroxyphenyl)prop-2-enoate + NAD(+) + H2O. It functions in the pathway aromatic compound metabolism; 3-phenylpropanoate degradation. Functionally, catalyzes the insertion of one atom of molecular oxygen into position 2 of the phenyl ring of 3-(3-hydroxyphenyl)propionate (3-HPP) and hydroxycinnamic acid (3HCI). This chain is 3-(3-hydroxy-phenyl)propionate/3-hydroxycinnamic acid hydroxylase, found in Escherichia coli O17:K52:H18 (strain UMN026 / ExPEC).